Consider the following 366-residue polypeptide: Chorismate synthase (366 aa).

Arginine 48 and arginine 54 together coordinate NADP(+). FMN-binding positions include 131-133, 243-244, glycine 288, 303-307, and arginine 329; these read RAS, NA, and KPTPS.

This sequence belongs to the chorismate synthase family. As to quaternary structure, homotetramer. The cofactor is FMNH2.

It catalyses the reaction 5-O-(1-carboxyvinyl)-3-phosphoshikimate = chorismate + phosphate. It participates in metabolic intermediate biosynthesis; chorismate biosynthesis; chorismate from D-erythrose 4-phosphate and phosphoenolpyruvate: step 7/7. Catalyzes the anti-1,4-elimination of the C-3 phosphate and the C-6 proR hydrogen from 5-enolpyruvylshikimate-3-phosphate (EPSP) to yield chorismate, which is the branch point compound that serves as the starting substrate for the three terminal pathways of aromatic amino acid biosynthesis. This reaction introduces a second double bond into the aromatic ring system. This is Chorismate synthase from Bartonella quintana (strain Toulouse) (Rochalimaea quintana).